The following is a 254-amino-acid chain: DNA repair protein RecO (254 aa).

The protein belongs to the RecO family.

Its function is as follows. Involved in DNA repair and RecF pathway recombination. The sequence is that of DNA repair protein RecO from Anaeromyxobacter dehalogenans (strain 2CP-C).